The following is a 159-amino-acid chain: Testis-specific XK-related protein, Y-linked (159 aa).

3 helical membrane passes run 1–21, 45–65, and 72–92; these read MFIFNSIADDIFPLISCVGAI, IYLMIWHSLVIISPVVTLAFF, and GSLHFLLIIYFVLLLTPWLEF.

This sequence belongs to the XK family. In terms of tissue distribution, testis specific.

It is found in the membrane. This Homo sapiens (Human) protein is Testis-specific XK-related protein, Y-linked (XKRY).